The chain runs to 407 residues: Imidazolonepropionase (407 aa).

Residues H68 and H70 each contribute to the Fe(3+) site. Positions 68 and 70 each coordinate Zn(2+). 3 residues coordinate 4-imidazolone-5-propanoate: R77, Y140, and H173. Residue Y140 coordinates N-formimidoyl-L-glutamate. H238 provides a ligand contact to Fe(3+). H238 is a binding site for Zn(2+). Q241 is a binding site for 4-imidazolone-5-propanoate. D313 serves as a coordination point for Fe(3+). Residue D313 coordinates Zn(2+). N-formimidoyl-L-glutamate contacts are provided by N315 and G317. Position 318 (T318) interacts with 4-imidazolone-5-propanoate.

This sequence belongs to the metallo-dependent hydrolases superfamily. HutI family. Zn(2+) is required as a cofactor. Requires Fe(3+) as cofactor.

The protein resides in the cytoplasm. It carries out the reaction 4-imidazolone-5-propanoate + H2O = N-formimidoyl-L-glutamate. It functions in the pathway amino-acid degradation; L-histidine degradation into L-glutamate; N-formimidoyl-L-glutamate from L-histidine: step 3/3. In terms of biological role, catalyzes the hydrolytic cleavage of the carbon-nitrogen bond in imidazolone-5-propanoate to yield N-formimidoyl-L-glutamate. It is the third step in the universal histidine degradation pathway. In Burkholderia ambifaria (strain MC40-6), this protein is Imidazolonepropionase.